The following is a 90-amino-acid chain: Small ribosomal subunit protein bS16 (90 aa).

It belongs to the bacterial ribosomal protein bS16 family.

This Streptococcus thermophilus (strain CNRZ 1066) protein is Small ribosomal subunit protein bS16.